The chain runs to 276 residues: Large ribosomal subunit protein uL2 (276 aa).

The disordered stretch occupies residues 219-268 (TVRGSVMNPNDHPHGGGEGRQPVGRKSPMTPWGKPALGLKTRNKKAKSSK).

It belongs to the universal ribosomal protein uL2 family. As to quaternary structure, part of the 50S ribosomal subunit. Forms a bridge to the 30S subunit in the 70S ribosome.

In terms of biological role, one of the primary rRNA binding proteins. Required for association of the 30S and 50S subunits to form the 70S ribosome, for tRNA binding and peptide bond formation. It has been suggested to have peptidyltransferase activity; this is somewhat controversial. Makes several contacts with the 16S rRNA in the 70S ribosome. This Lactococcus lactis subsp. lactis (strain IL1403) (Streptococcus lactis) protein is Large ribosomal subunit protein uL2.